Here is a 498-residue protein sequence, read N- to C-terminus: Ammonium transporter 1 member 3 (498 aa).

The next 11 membrane-spanning stretches (helical) occupy residues 41–61, 76–96, 122–142, 150–170, 194–214, 238–258, 277–299, 307–327, 329–349, 362–382, and 414–434; these read LLFS…LCAG, VLDA…FAFG, FFLF…GSIA, YLIY…HWFW, FAGS…GAFI, LVVL…PGSF, AVGR…TLYG, WNVT…TAGC, VVDP…LIGC, LEAT…TALF, and IVQI…LFYV. Residues 473–498 form a disordered region; that stretch reads RAKSAAETARVEPRKSPEQAAAGQFV.

The protein belongs to the ammonia transporter channel (TC 1.A.11.2) family. In terms of tissue distribution, expressed in roots.

The protein resides in the membrane. In terms of biological role, ammonium transporter probably involved in ammonium uptake from the soil. The chain is Ammonium transporter 1 member 3 (AMT1-3) from Oryza sativa subsp. japonica (Rice).